We begin with the raw amino-acid sequence, 92 residues long: Integration host factor subunit beta (92 aa).

The protein belongs to the bacterial histone-like protein family. In terms of assembly, heterodimer of an alpha and a beta chain.

This protein is one of the two subunits of integration host factor, a specific DNA-binding protein that functions in genetic recombination as well as in transcriptional and translational control. This Bartonella tribocorum (strain CIP 105476 / IBS 506) protein is Integration host factor subunit beta.